Here is a 372-residue protein sequence, read N- to C-terminus: UDP-N-acetylglucosamine--N-acetylmuramyl-(pentapeptide) pyrophosphoryl-undecaprenol N-acetylglucosamine transferase (372 aa).

Residues 21-23 (TAG), N135, R172, S206, and Q303 each bind UDP-N-acetyl-alpha-D-glucosamine.

Belongs to the glycosyltransferase 28 family. MurG subfamily.

The protein localises to the cell membrane. The enzyme catalyses di-trans,octa-cis-undecaprenyl diphospho-N-acetyl-alpha-D-muramoyl-L-alanyl-D-glutamyl-meso-2,6-diaminopimeloyl-D-alanyl-D-alanine + UDP-N-acetyl-alpha-D-glucosamine = di-trans,octa-cis-undecaprenyl diphospho-[N-acetyl-alpha-D-glucosaminyl-(1-&gt;4)]-N-acetyl-alpha-D-muramoyl-L-alanyl-D-glutamyl-meso-2,6-diaminopimeloyl-D-alanyl-D-alanine + UDP + H(+). It functions in the pathway cell wall biogenesis; peptidoglycan biosynthesis. Its function is as follows. Cell wall formation. Catalyzes the transfer of a GlcNAc subunit on undecaprenyl-pyrophosphoryl-MurNAc-pentapeptide (lipid intermediate I) to form undecaprenyl-pyrophosphoryl-MurNAc-(pentapeptide)GlcNAc (lipid intermediate II). In Paenarthrobacter aurescens (strain TC1), this protein is UDP-N-acetylglucosamine--N-acetylmuramyl-(pentapeptide) pyrophosphoryl-undecaprenol N-acetylglucosamine transferase.